A 95-amino-acid chain; its full sequence is uncharacterized protein (95 aa).

This is an uncharacterized protein from Acheta domesticus (House cricket).